A 563-amino-acid polypeptide reads, in one-letter code: Tripeptidyl-peptidase 1 (563 aa).

Residues 1–19 (MGPRSGLLGLFALFVAGKC) form the signal peptide. Positions 20 to 195 (SYSPEPDQQR…PEPQVPGTVG (176 aa)) are cleaved as a propeptide — removed in mature form. A disulfide bridge links Cys-111 with Cys-122. Residues 199-563 (GVTPSVIRKR…PALLKTLMNP (365 aa)) enclose the Peptidase S53 domain. Asn-210 and Asn-222 each carry an N-linked (GlcNAc...) asparagine glycan. Active-site charge relay system residues include Glu-272 and Asp-276. 3 N-linked (GlcNAc...) asparagine glycosylation sites follow: Asn-286, Asn-313, and Asn-443. 2 disulfide bridges follow: Cys-365/Cys-526 and Cys-522/Cys-537. The Charge relay system role is filled by Ser-475. Ca(2+) is bound by residues Asp-517 and Val-518. Residues Gly-539, Gly-541, and Asp-543 each coordinate Ca(2+).

As to quaternary structure, monomer. Interacts with CLN5. Interacts with CLN3. Ca(2+) is required as a cofactor. In terms of processing, activated by autocatalytic proteolytical processing upon acidification. N-glycosylation is required for processing and activity.

The protein resides in the lysosome. The protein localises to the melanosome. It carries out the reaction Release of an N-terminal tripeptide from a polypeptide, but also has endopeptidase activity.. In terms of biological role, lysosomal serine protease with tripeptidyl-peptidase I activity. May act as a non-specific lysosomal peptidase which generates tripeptides from the breakdown products produced by lysosomal proteinases. Requires substrates with an unsubstituted N-terminus. The sequence is that of Tripeptidyl-peptidase 1 (TPP1) from Bos taurus (Bovine).